Reading from the N-terminus, the 447-residue chain is Protein disulfide-isomerase like 2-2 (447 aa).

An N-terminal signal peptide occupies residues 1–26; sequence MERKMYKSTVFPICCLLFALFDRGNA. 2 Thioredoxin domains span residues 27–139 and 161–275; these read LYGS…QIKA and KKKS…QLES. Catalysis depends on nucleophile residues Cys62 and Cys65. A disulfide bridge links Cys62 with Cys65. The disordered stretch occupies residues 146 to 170; sequence DGKTSGTKNGGGSSEKKKSEPSASV. Residue Asn173 is glycosylated (N-linked (GlcNAc...) asparagine). Residues Cys197 and Cys200 each act as nucleophile in the active site. A disulfide bridge connects residues Cys197 and Cys200. A Prevents secretion from ER motif is present at residues 444-447; the sequence is KDDL.

The protein belongs to the protein disulfide isomerase family. As to expression, widely expressed.

It localises to the endoplasmic reticulum lumen. It catalyses the reaction Catalyzes the rearrangement of -S-S- bonds in proteins.. In terms of biological role, acts as a protein-folding catalyst that interacts with nascent polypeptides to catalyze the formation, isomerization, and reduction or oxidation of disulfide bonds. The polypeptide is Protein disulfide-isomerase like 2-2 (PDIL2-2) (Arabidopsis thaliana (Mouse-ear cress)).